The sequence spans 247 residues: NAD(P)H-quinone oxidoreductase subunit K (247 aa).

Residues Cys63, Cys64, Cys128, and Cys159 each contribute to the [4Fe-4S] cluster site.

Belongs to the complex I 20 kDa subunit family. In terms of assembly, NDH-1 can be composed of about 15 different subunits; different subcomplexes with different compositions have been identified which probably have different functions. [4Fe-4S] cluster serves as cofactor.

The protein localises to the cellular thylakoid membrane. The catalysed reaction is a plastoquinone + NADH + (n+1) H(+)(in) = a plastoquinol + NAD(+) + n H(+)(out). It carries out the reaction a plastoquinone + NADPH + (n+1) H(+)(in) = a plastoquinol + NADP(+) + n H(+)(out). Functionally, NDH-1 shuttles electrons from an unknown electron donor, via FMN and iron-sulfur (Fe-S) centers, to quinones in the respiratory and/or the photosynthetic chain. The immediate electron acceptor for the enzyme in this species is believed to be plastoquinone. Couples the redox reaction to proton translocation, and thus conserves the redox energy in a proton gradient. Cyanobacterial NDH-1 also plays a role in inorganic carbon-concentration. This is NAD(P)H-quinone oxidoreductase subunit K from Gloeothece citriformis (strain PCC 7424) (Cyanothece sp. (strain PCC 7424)).